We begin with the raw amino-acid sequence, 464 residues long: MYENFCIYHIGLDDFDLLSYGCTTHVATYLLHSLAKRFSSIVFIDYPNLVRLNPSIPWKTRGNGAIAIRIAMECTDLNNLLEAAEDIIDEYYEKYGVRTKDVVSSDREPGLVVVRNGIVNDMGSLYITALTDVLLPEIVKKKIDKYGRENIVVSKRYCGRGIVGAAASVGWIAIDSDYTYELLVYRSEKFYSLDRCVNEESVKYFDSITKDRTFNNIDVDSNRILITSHGRDPILYGVRGEDPEVLLKALDIIRVCEPISSWTIFRTNQATDAHAIDRSVSSLRVYRTGKIRVTISSKPSIGMGGTVIINGFDATGSITLAFFRPSYLNRYASMLIPGDVIEANGHVKPWNIGPVFHVEKFSVLKLAPLYRCKAPRCPYCRKRLTKMGRGKGYKCDKCGYSVINPDLECEYIERKIRLGLYIPPPRALKHLIKPIERYGKEKYRHRYPIELKLSQITKILETSI.

The protein belongs to the TiaS family.

The protein resides in the cytoplasm. The enzyme catalyses cytidine(34) in tRNA(Ile2) + agmatine + ATP + H2O = 2-agmatinylcytidine(34) in tRNA(Ile2) + AMP + 2 phosphate + 2 H(+). ATP-dependent agmatine transferase that catalyzes the formation of 2-agmatinylcytidine (agm2C) at the wobble position (C34) of tRNA(Ile2), converting the codon specificity from AUG to AUA. The protein is tRNA(Ile2) 2-agmatinylcytidine synthetase TiaS of Ignisphaera aggregans (strain DSM 17230 / JCM 13409 / AQ1.S1).